We begin with the raw amino-acid sequence, 1293 residues long: Galactose/N-acetyl-D-galactosamine lectin heavy subunit 1 (1293 aa).

The signal sequence occupies residues 1 to 15; it reads MKLLLLNILLLCCLA. At 16–1234 the chain is on the extracellular side; the sequence is DKLNEFSADI…NNVGAIAAAT (1219 aa). Residues Asn95, Asn198, Asn234, Asn261, Asn337, Asn377, Asn390, Asn468, Asn487, Asn643, Asn659, Asn890, Asn992, Asn1138, Asn1204, and Asn1214 are each glycosylated (N-linked (GlcNAc...) asparagine). The chain crosses the membrane as a helical span at residues 1235-1255; the sequence is TVAVVVVAVVVALIVVSIGLF. Residues 1256 to 1293 are Cytoplasmic-facing; sequence KTYQLVSSAMKNAITITNENAEYVGADNEATNAATFNG.

As to quaternary structure, heterodimer composed of a 170 kDa heavy subunit (hgl) and a 31/35 kDa light subunit (lgl); disulfide-linked. N-glycosylated.

Its subcellular location is the cell membrane. Functionally, lectin which binds galactose and N-acetyl-D-galactosamine of host glycoproteins and thus mediates adhesion to host cells. Mediates adherence to host colonic mucins, an essential step for pathogenic tissue invasion. This is Galactose/N-acetyl-D-galactosamine lectin heavy subunit 1 from Entamoeba histolytica (strain ATCC 30459 / HM-1:IMSS / ABRM).